A 99-amino-acid chain; its full sequence is Integration host factor subunit alpha (99 aa).

It belongs to the bacterial histone-like protein family. Heterodimer of an alpha and a beta chain.

This protein is one of the two subunits of integration host factor, a specific DNA-binding protein that functions in genetic recombination as well as in transcriptional and translational control. The sequence is that of Integration host factor subunit alpha from Alteromonas mediterranea (strain DSM 17117 / CIP 110805 / LMG 28347 / Deep ecotype).